The primary structure comprises 504 residues: Prenylcysteine oxidase 1 (504 aa).

The first 28 residues, 1–28, serve as a signal peptide directing secretion; the sequence is MGRFAATLVGSLFGLGLLLCGLGRLASA. N-linked (GlcNAc...) asparagine glycosylation is found at Asn196, Asn322, and Asn352.

This sequence belongs to the prenylcysteine oxidase family. The cofactor is FAD. In terms of tissue distribution, expressed mainly in cerebrum.

The protein localises to the lysosome. It catalyses the reaction an S-polyprenyl-L-cysteine + O2 + H2O = a polyprenal + L-cysteine + H2O2. The catalysed reaction is S-(2E,6E)-farnesyl-L-cysteine + O2 + H2O = (2E,6E)-farnesal + L-cysteine + H2O2. It carries out the reaction [(2E,6E,10E)-geranylgeranyl]-L-cysteine + O2 + H2O = (2E,6E,10E)-geranylgeranial + L-cysteine + H2O2. Its function is as follows. Prenylcysteine oxidase that cleaves the thioether bond of prenyl-L-cysteines, such as farnesylcysteine and geranylgeranylcysteine. Only active against free prenylcysteines and not prenylcysteine residues within prenylated proteins or peptides. Involved in the final step in the degradation of prenylated proteins, by degrading prenylcysteines after the protein has been degraded. In Rattus norvegicus (Rat), this protein is Prenylcysteine oxidase 1.